Reading from the N-terminus, the 184-residue chain is Photosystem I assembly protein Ycf4 (184 aa).

A run of 2 helical transmembrane segments spans residues 19 to 39 and 57 to 77; these read ISNFCWAFILFLGSLGFLLVG and IIFFPQGLVMSFYGIAGLFIS.

This sequence belongs to the Ycf4 family.

The protein localises to the plastid. The protein resides in the chloroplast thylakoid membrane. Seems to be required for the assembly of the photosystem I complex. The protein is Photosystem I assembly protein Ycf4 of Nicotiana sylvestris (Wood tobacco).